The following is a 301-amino-acid chain: Probable alpha-L-glutamate ligase (301 aa).

The ATP-grasp domain maps to 104–287 (LQLLSRRGVG…VAGLIIQYLE (184 aa)). Residues K141, 178 to 179 (EY), D187, and 211 to 213 (RSN) contribute to the ATP site. Mg(2+) contacts are provided by D248, E260, and N262. Mn(2+) is bound by residues D248, E260, and N262.

Belongs to the RimK family. Mg(2+) serves as cofactor. Requires Mn(2+) as cofactor.

The sequence is that of Probable alpha-L-glutamate ligase from Stutzerimonas stutzeri (strain A1501) (Pseudomonas stutzeri).